Here is a 510-residue protein sequence, read N- to C-terminus: uncharacterized protein (510 aa).

The protein belongs to the phage portal family. PBSX subfamily.

This is an uncharacterized protein from Bacillus subtilis (strain 168).